We begin with the raw amino-acid sequence, 208 residues long: Octanoyltransferase (208 aa).

The BPL/LPL catalytic domain occupies 30–208 (GTASEAVFIL…ILKQEFYKIF (179 aa)). Substrate is bound by residues 69–76 (RGGKFTYH), 142–144 (SIG), and 155–157 (GVA). The active-site Acyl-thioester intermediate is the cysteine 173.

This sequence belongs to the LipB family.

It localises to the cytoplasm. The catalysed reaction is octanoyl-[ACP] + L-lysyl-[protein] = N(6)-octanoyl-L-lysyl-[protein] + holo-[ACP] + H(+). It functions in the pathway protein modification; protein lipoylation via endogenous pathway; protein N(6)-(lipoyl)lysine from octanoyl-[acyl-carrier-protein]: step 1/2. Catalyzes the transfer of endogenously produced octanoic acid from octanoyl-acyl-carrier-protein onto the lipoyl domains of lipoate-dependent enzymes. Lipoyl-ACP can also act as a substrate although octanoyl-ACP is likely to be the physiological substrate. This Orientia tsutsugamushi (strain Boryong) (Rickettsia tsutsugamushi) protein is Octanoyltransferase.